A 30-amino-acid polypeptide reads, in one-letter code: Photosystem I reaction center subunit XII (30 aa).

The helical transmembrane segment at 7-29 (IYTVLCIALLAGILAIRLGSTLY) threads the bilayer.

Belongs to the PsaM family.

Its subcellular location is the plastid. It is found in the chloroplast thylakoid membrane. In Phaeodactylum tricornutum (strain CCAP 1055/1), this protein is Photosystem I reaction center subunit XII.